A 191-amino-acid chain; its full sequence is dCTP deaminase, dUMP-forming (191 aa).

DCTP contacts are provided by residues 101–106 (KSSLGR), aspartate 119, 127–129 (TLE), glutamine 148, tyrosine 162, and glutamine 174. The active-site Proton donor/acceptor is the glutamate 129.

The protein belongs to the dCTP deaminase family. As to quaternary structure, homotrimer.

The enzyme catalyses dCTP + 2 H2O = dUMP + NH4(+) + diphosphate. It participates in pyrimidine metabolism; dUMP biosynthesis; dUMP from dCTP: step 1/1. In terms of biological role, bifunctional enzyme that catalyzes both the deamination of dCTP to dUTP and the hydrolysis of dUTP to dUMP without releasing the toxic dUTP intermediate. This chain is dCTP deaminase, dUMP-forming, found in Streptomyces coelicolor (strain ATCC BAA-471 / A3(2) / M145).